We begin with the raw amino-acid sequence, 71 residues long: IRCFITPDITSKDCPNGHVCYTKTWCDGFCSSRGKRVDLGCAATCPTVRTGVDIQCCSTDDCDPFPTRKRP.

Disulfide bonds link Cys3–Cys20, Cys14–Cys41, Cys26–Cys30, Cys45–Cys56, and Cys57–Cys62.

The protein belongs to the three-finger toxin family. Long-chain subfamily. Type II alpha-neurotoxin sub-subfamily. In terms of tissue distribution, expressed by the venom gland.

It localises to the secreted. Its function is as follows. Binds with high affinity to muscular (alpha-1/CHRNA1) and neuronal (alpha-7/CHRNA7) nicotinic acetylcholine receptor (nAChR) and inhibits acetylcholine from binding to the receptor, thereby impairing neuromuscular and neuronal transmission. The polypeptide is Long neurotoxin 2 (Naja naja (Indian cobra)).